The chain runs to 212 residues: Large ribosomal subunit protein uL3 (212 aa).

Residue Gln-153 is modified to N5-methylglutamine.

Belongs to the universal ribosomal protein uL3 family. As to quaternary structure, part of the 50S ribosomal subunit. Forms a cluster with proteins L14 and L19. In terms of processing, methylated by PrmB.

Its function is as follows. One of the primary rRNA binding proteins, it binds directly near the 3'-end of the 23S rRNA, where it nucleates assembly of the 50S subunit. In Shewanella sediminis (strain HAW-EB3), this protein is Large ribosomal subunit protein uL3.